The sequence spans 118 residues: Large ribosomal subunit protein bL20 (118 aa).

This sequence belongs to the bacterial ribosomal protein bL20 family.

Binds directly to 23S ribosomal RNA and is necessary for the in vitro assembly process of the 50S ribosomal subunit. It is not involved in the protein synthesizing functions of that subunit. This is Large ribosomal subunit protein bL20 from Psychrobacter sp. (strain PRwf-1).